A 144-amino-acid chain; its full sequence is Gas vesicle protein A1 (144 aa).

The tract at residues 72-144 (EAGPRKDPGL…APSRRKEEQE (73 aa)) is disordered. Residues 113 to 127 (KQARDDGGSERETSS) show a composition bias toward basic and acidic residues.

It belongs to the gas vesicle GvpA family. In terms of assembly, the gas vesicle shell is 2 nm thick and consists of a single layer of this protein. It forms helical ribs nearly perpendicular to the long axis of the vesicle.

It is found in the gas vesicle shell. Its function is as follows. Gas vesicles are hollow, gas filled proteinaceous nanostructures found in some microorganisms. During planktonic growth they allow positioning of the organism at a favorable depth for light or nutrient acquisition. GvpA forms the protein shell. It is not clear what function GVs perform in soil bacteria. This Streptomyces coelicolor (strain ATCC BAA-471 / A3(2) / M145) protein is Gas vesicle protein A1.